Here is a 480-residue protein sequence, read N- to C-terminus: Glutamyl-tRNA(Gln) amidotransferase subunit A (480 aa).

Catalysis depends on charge relay system residues Lys-76 and Ser-151. Ser-175 (acyl-ester intermediate) is an active-site residue.

It belongs to the amidase family. GatA subfamily. Heterotrimer of A, B and C subunits.

It carries out the reaction L-glutamyl-tRNA(Gln) + L-glutamine + ATP + H2O = L-glutaminyl-tRNA(Gln) + L-glutamate + ADP + phosphate + H(+). Functionally, allows the formation of correctly charged Gln-tRNA(Gln) through the transamidation of misacylated Glu-tRNA(Gln) in organisms which lack glutaminyl-tRNA synthetase. The reaction takes place in the presence of glutamine and ATP through an activated gamma-phospho-Glu-tRNA(Gln). This Exiguobacterium sp. (strain ATCC BAA-1283 / AT1b) protein is Glutamyl-tRNA(Gln) amidotransferase subunit A.